The sequence spans 144 residues: Crossover junction endodeoxyribonuclease Hjc (144 aa).

A Mg(2+)-binding site is contributed by Glu12. Ser32 is an active-site residue. 2 residues coordinate Mg(2+): Asp42 and Glu55.

The protein belongs to the Holliday junction resolvase Hjc family. Homodimer; forms a 2:1 complex with Hel308 (Hjm). May form a complex with Holliday junction DNA, Hjc and Hjm. Mg(2+) is required as a cofactor.

The enzyme catalyses Endonucleolytic cleavage at a junction such as a reciprocal single-stranded crossover between two homologous DNA duplexes (Holliday junction).. With respect to regulation, cleavage stimulated by PCNA123 and PCNA323 and by RadC2. Functionally, a structure-specific endonuclease that resolves Holliday junction (HJ) intermediates during genetic recombination. Cleaves 4-way DNA junctions introducing paired nicks in opposing strands, leaving a 5'-terminal phosphate and a 3'-terminal hydroxyl group that are subsequently ligated to produce recombinant products. Inhibits the helicase activity of Hel308 (Hjm). The sequence is that of Crossover junction endodeoxyribonuclease Hjc from Sulfurisphaera tokodaii (strain DSM 16993 / JCM 10545 / NBRC 100140 / 7) (Sulfolobus tokodaii).